We begin with the raw amino-acid sequence, 298 residues long: Pyridoxal kinase PdxY (298 aa).

Ser17 lines the substrate pocket. The ATP site is built by Asp119 and Glu156. Asp234 contacts substrate.

This sequence belongs to the pyridoxine kinase family. PdxY subfamily. Homodimer. Requires Mg(2+) as cofactor.

The enzyme catalyses pyridoxal + ATP = pyridoxal 5'-phosphate + ADP + H(+). It functions in the pathway cofactor metabolism; pyridoxal 5'-phosphate salvage; pyridoxal 5'-phosphate from pyridoxal: step 1/1. Pyridoxal kinase involved in the salvage pathway of pyridoxal 5'-phosphate (PLP). Catalyzes the phosphorylation of pyridoxal to PLP. The chain is Pyridoxal kinase PdxY from Deinococcus radiodurans (strain ATCC 13939 / DSM 20539 / JCM 16871 / CCUG 27074 / LMG 4051 / NBRC 15346 / NCIMB 9279 / VKM B-1422 / R1).